The sequence spans 613 residues: MPDYRSKTSTHGRNMAGARALWRATGMKDDDFKKPIIAIANSFTQFVPGHVHLKDLGQLVAREIERAGGVAKEFNTIAVDDGIAMGHDGMLYSLPSREIIADSVEYMVNAHCADAIVCISNCDKITPGMLMAALRLNIPVIFVSGGPMEAGKTKLASHGLDLVDAMVIAADSSASDEKVAEYERSACPTCGSCSGMFTANSMNCLTEALGLALPGNGSTLATHSDREQLFLQAGRTIVELCKRYYGENDESVLPRNIANFKAFENAMMLDIAMGGSTNTILHLLAAAQEAEIDFDLRDIDRLSRKVPQLCKVAPNIQKYHMEDVHRAGGIFSILGSLARGGLLHTDLPTVHSRSMEEAIAKWDITQTDDEAVHHFFKAGPAGIPTQTAFSQSTRWETLDDDRENGCIRSFEHAYSKEGGLAVLYGNIALDGCVVKTAGVDESIHVFEGNAKIFESQDSAVRGILADEVKEGDIVIIRYEGPKGGPGMQEMLYPTSYLKSKGLGKACALLTDGRFSGGTSGLSIGHASPEAAAGGAIGLVQDGDKVLIDIPNRSINLLISDEELAARRVEQDKKGWKPVEQRPRKVTTALKAYALLATSADKGAVRNKAMLDGL.

Residue Asp-81 participates in Mg(2+) binding. Position 122 (Cys-122) interacts with [2Fe-2S] cluster. Residues Asp-123 and Lys-124 each contribute to the Mg(2+) site. Lys-124 is subject to N6-carboxylysine. Residue Cys-193 coordinates [2Fe-2S] cluster. Glu-489 is a Mg(2+) binding site. Residue Ser-515 is the Proton acceptor of the active site.

The protein belongs to the IlvD/Edd family. As to quaternary structure, homodimer. Requires [2Fe-2S] cluster as cofactor. It depends on Mg(2+) as a cofactor.

The enzyme catalyses (2R)-2,3-dihydroxy-3-methylbutanoate = 3-methyl-2-oxobutanoate + H2O. The catalysed reaction is (2R,3R)-2,3-dihydroxy-3-methylpentanoate = (S)-3-methyl-2-oxopentanoate + H2O. Its pathway is amino-acid biosynthesis; L-isoleucine biosynthesis; L-isoleucine from 2-oxobutanoate: step 3/4. It functions in the pathway amino-acid biosynthesis; L-valine biosynthesis; L-valine from pyruvate: step 3/4. Functionally, functions in the biosynthesis of branched-chain amino acids. Catalyzes the dehydration of (2R,3R)-2,3-dihydroxy-3-methylpentanoate (2,3-dihydroxy-3-methylvalerate) into 2-oxo-3-methylpentanoate (2-oxo-3-methylvalerate) and of (2R)-2,3-dihydroxy-3-methylbutanoate (2,3-dihydroxyisovalerate) into 2-oxo-3-methylbutanoate (2-oxoisovalerate), the penultimate precursor to L-isoleucine and L-valine, respectively. This is Dihydroxy-acid dehydratase from Pseudomonas fluorescens (strain Pf0-1).